We begin with the raw amino-acid sequence, 488 residues long: L-arabinose isomerase 1 (488 aa).

4 residues coordinate Mn(2+): glutamate 306, glutamate 331, histidine 348, and histidine 447.

This sequence belongs to the arabinose isomerase family. Mn(2+) serves as cofactor.

It carries out the reaction beta-L-arabinopyranose = L-ribulose. It participates in carbohydrate degradation; L-arabinose degradation via L-ribulose; D-xylulose 5-phosphate from L-arabinose (bacterial route): step 1/3. Functionally, catalyzes the conversion of L-arabinose to L-ribulose. The polypeptide is L-arabinose isomerase 1 (Clostridium acetobutylicum (strain ATCC 824 / DSM 792 / JCM 1419 / IAM 19013 / LMG 5710 / NBRC 13948 / NRRL B-527 / VKM B-1787 / 2291 / W)).